A 455-amino-acid chain; its full sequence is ADP-dependent glucose/glucosamine kinase (455 aa).

The region spanning 2-455 (PTWEELYKNA…AFIGEFSFTL (454 aa)) is the ADPK domain. Residues Asp34, Glu88, 112-113 (GQ), and His176 each bind D-glucose. ADP is bound at residue Glu195. Residue Glu266 coordinates Mg(2+). An ADP-binding site is contributed by Asn292. Glu295 contributes to the Mg(2+) binding site. ADP is bound by residues 342–343 (HT), Val429, and Gly439. Position 440 (Asp440) interacts with D-glucose. Residue Asp440 participates in Mg(2+) binding. The Proton acceptor role is filled by Asp440.

Belongs to the ADP-dependent glucokinase family. In terms of assembly, homodimer. The cofactor is Mg(2+).

Its subcellular location is the cytoplasm. It carries out the reaction D-glucose + ADP = D-glucose 6-phosphate + AMP + H(+). The enzyme catalyses D-glucosamine + ADP = D-glucosamine 6-phosphate + AMP + H(+). It participates in carbohydrate degradation; glycolysis. Its function is as follows. Catalyzes the ADP-dependent phosphorylation of D-glucose to D-glucose 6-phosphate and glucosamine to glucosamine 6-phosphate. Can also use CDP as the phosphoryl group donor and D-1,5-anhydroglucitol as the phosphoryl group acceptor. This is ADP-dependent glucose/glucosamine kinase from Pyrococcus furiosus (strain ATCC 43587 / DSM 3638 / JCM 8422 / Vc1).